Here is a 158-residue protein sequence, read N- to C-terminus: Small ribosomal subunit protein uS7 (158 aa).

It belongs to the universal ribosomal protein uS7 family. As to quaternary structure, part of the 30S ribosomal subunit. Contacts proteins S9 and S11.

Its function is as follows. One of the primary rRNA binding proteins, it binds directly to 16S rRNA where it nucleates assembly of the head domain of the 30S subunit. Is located at the subunit interface close to the decoding center, probably blocks exit of the E-site tRNA. This Flavobacterium johnsoniae (strain ATCC 17061 / DSM 2064 / JCM 8514 / BCRC 14874 / CCUG 350202 / NBRC 14942 / NCIMB 11054 / UW101) (Cytophaga johnsonae) protein is Small ribosomal subunit protein uS7.